We begin with the raw amino-acid sequence, 129 residues long: HTH-type transcriptional regulator GlnR (129 aa).

One can recognise an HTH merR-type domain in the interval 10–78 (LFPIGIVMDL…MAGIKQVLLM (69 aa)). Residues 13–32 (IGIVMDLTQLSARQIRYYEE) constitute a DNA-binding region (H-T-H motif).

Homodimer under conditions of nitrogen excess. Monomer under conditions of nitrogen-limited. Interacts with feedback-inhibited GlnA in order to stabilizes GlnR-DNA complex.

Under conditions of nitrogen excess, the DNA binding activity of GlnR is activated by a transient interaction with feedback-inhibited GlnA. Under conditions of nitrogen-limited, GlnR is autoinhibited by its C-terminal region. Transcription repressor during nitrogen excess. On the contrary of the MerR members, which require longer DNA sites for high-affinity binding, GlnR requires a DNA sequence of 17 nucleotides as minimal binding site. This chain is HTH-type transcriptional regulator GlnR, found in Bacillus anthracis.